The sequence spans 404 residues: Putative gustatory receptor 94a (404 aa).

Topologically, residues 1–11 are cytoplasmic; it reads MDFTSDYAHRR. A helical membrane pass occupies residues 12-32; sequence MVKFLTIILIGFMTVFGLLAN. The Extracellular segment spans residues 33-43; the sequence is RYRAGRRERFR. Residues 44 to 64 traverse the membrane as a helical segment; that stretch reads FSKANLAFASLWAIAFSLVYG. Residues 65–133 are Cytoplasmic-facing; sequence RQIYKEYQEG…RLDSRSLYIS (69 aa). A helical transmembrane segment spans residues 134–154; the sequence is IVLALVKTVAFPLTIEVAFIL. Residues 155–171 are Extracellular-facing; it reads QQRRQHPEMSLIWTLYR. Residues 172-192 form a helical membrane-spanning segment; it reads LFPLIISNFLNNCYFGAMVVV. Over 193 to 260 the chain is Cytoplasmic; sequence KEILYALNRR…HSGKYLTPMS (68 aa). A helical membrane pass occupies residues 261 to 281; sequence LSMILSLICHLLGITVGFYSL. Topologically, residues 282-296 are extracellular; the sequence is YYAIADTLIMGKPYD. Residues 297–317 form a helical membrane-spanning segment; sequence GLGSLINLVFLSISLAEITLL. The Cytoplasmic portion of the chain corresponds to 318 to 376; the sequence is THLCNHLLVATRRSAVILQEMNLQHADSRYRQAVHGFTLLVTVTKYQIKPLGLYELDMR. A helical membrane pass occupies residues 377–397; it reads LISNVFSAVASFLLILVQADL. At 398–404 the chain is on the extracellular side; that stretch reads SQRFKMQ.

Belongs to the insect chemoreceptor superfamily. Gustatory receptor (GR) family. Gr22e subfamily. In terms of tissue distribution, in larvae, is expressed in neurons of the terminal external chemosensory organ.

It localises to the cell membrane. Its function is as follows. Probable gustatory receptor which mediates acceptance or avoidance behavior, depending on its substrates. This chain is Putative gustatory receptor 94a (Gr94a), found in Drosophila melanogaster (Fruit fly).